Here is a 282-residue protein sequence, read N- to C-terminus: Bifunctional protein FolD (282 aa).

Residues 164 to 166 (GAS), Ile-189, and Ile-230 contribute to the NADP(+) site.

Belongs to the tetrahydrofolate dehydrogenase/cyclohydrolase family. Homodimer.

The catalysed reaction is (6R)-5,10-methylene-5,6,7,8-tetrahydrofolate + NADP(+) = (6R)-5,10-methenyltetrahydrofolate + NADPH. It carries out the reaction (6R)-5,10-methenyltetrahydrofolate + H2O = (6R)-10-formyltetrahydrofolate + H(+). It functions in the pathway one-carbon metabolism; tetrahydrofolate interconversion. Catalyzes the oxidation of 5,10-methylenetetrahydrofolate to 5,10-methenyltetrahydrofolate and then the hydrolysis of 5,10-methenyltetrahydrofolate to 10-formyltetrahydrofolate. In Campylobacter jejuni (strain RM1221), this protein is Bifunctional protein FolD.